The primary structure comprises 178 residues: Large ribosomal subunit protein uL6 (178 aa).

This sequence belongs to the universal ribosomal protein uL6 family. Part of the 50S ribosomal subunit.

In terms of biological role, this protein binds to the 23S rRNA, and is important in its secondary structure. It is located near the subunit interface in the base of the L7/L12 stalk, and near the tRNA binding site of the peptidyltransferase center. This Thermoplasma volcanium (strain ATCC 51530 / DSM 4299 / JCM 9571 / NBRC 15438 / GSS1) protein is Large ribosomal subunit protein uL6.